A 159-amino-acid chain; its full sequence is Disulfide bond formation protein B (159 aa).

The Cytoplasmic segment spans residues 1-8; the sequence is MQANSRAF. The helical transmembrane segment at 9-25 threads the bilayer; sequence FLLIAVIAFGLVGYALY. Topologically, residues 26-43 are periplasmic; that stretch reads LQHVEGLQPCPLCVLQRF. Cysteines 35 and 38 form a disulfide. The helical transmembrane segment at 44–57 threads the bilayer; the sequence is AFVGIGVFSLLAAL. The Cytoplasmic portion of the chain corresponds to 58-63; the sequence is SSATRL. The helical transmembrane segment at 64-81 threads the bilayer; sequence LWHGLGMLSGLGGIFVAG. Topologically, residues 82-136 are periplasmic; that stretch reads YHVSLLLNPKASCGIDPIENWVNALPTAKWLPQVFESDGLCTAPLPPVLGVSIPL. A disulfide bridge links Cys-94 with Cys-122. The chain crosses the membrane as a helical span at residues 137-155; the sequence is WSLIWMVILALTLVVAMIR. The Cytoplasmic portion of the chain corresponds to 156–159; sequence RERR.

It belongs to the DsbB family.

It localises to the cell inner membrane. In terms of biological role, required for disulfide bond formation in some periplasmic proteins. Acts by oxidizing the DsbA protein. In Ralstonia nicotianae (strain ATCC BAA-1114 / GMI1000) (Ralstonia solanacearum), this protein is Disulfide bond formation protein B.